The chain runs to 170 residues: Small ribosomal subunit protein uS15 (170 aa).

Residues 1–10 are compositionally biased toward basic residues; that stretch reads MARMHSRKKG. The segment at 1–20 is disordered; sequence MARMHSRKKGSSGSRPPVVD.

It belongs to the universal ribosomal protein uS15 family. In terms of assembly, part of the 30S ribosomal subunit.

The polypeptide is Small ribosomal subunit protein uS15 (Methanothrix thermoacetophila (strain DSM 6194 / JCM 14653 / NBRC 101360 / PT) (Methanosaeta thermophila)).